Consider the following 322-residue polypeptide: Nodulation protein Z (322 aa).

The 314-residue stretch at 1-314 (MYNRYVLSRR…NDPSRLVVIE (314 aa)) folds into the GT23 domain.

The protein belongs to the glycosyltransferase 23 family.

Fucosyltransferase which adds the fucose moiety of the nod factor on its terminal reducing N-acetylglucosamine end. Uses GDP-fucose as the donor group. This Sinorhizobium fredii (strain NBRC 101917 / NGR234) protein is Nodulation protein Z (nodZ).